The primary structure comprises 303 residues: MKVETMNWITEVVRPRIKTLFKRETPENLWVKCPETGQMVFHKEVEAHDFVIPGSEHHLRMSAQQRLKMMFDQGTWLDVPLPEAPVDPLKFRDEKRYVDRLKDARAKTGMADAFKVGFGRVGGLPMTLAVQDFGFMGGSLGMAAGEAFVRGAETALDKRTPYVLFAASGGARMQEGILSLMQMPRTTVAVRRLNRARLPYIVVLTNPTTGGVTASYAMLGDVHLAEPGALIGFAGPRVIEQTIREKLPDGFQRAEYLREHGMIDQVVHRRDLKATVARLCGLLMQAPAATPAPASAAAQPVPA.

In terms of domain architecture, CoA carboxyltransferase N-terminal spans 29 to 298 (LWVKCPETGQ…ATPAPASAAA (270 aa)).

It belongs to the AccD/PCCB family. In terms of assembly, acetyl-CoA carboxylase is a heterohexamer composed of biotin carboxyl carrier protein (AccB), biotin carboxylase (AccC) and two subunits each of ACCase subunit alpha (AccA) and ACCase subunit beta (AccD).

The protein resides in the cytoplasm. It carries out the reaction N(6)-carboxybiotinyl-L-lysyl-[protein] + acetyl-CoA = N(6)-biotinyl-L-lysyl-[protein] + malonyl-CoA. It functions in the pathway lipid metabolism; malonyl-CoA biosynthesis; malonyl-CoA from acetyl-CoA: step 1/1. Component of the acetyl coenzyme A carboxylase (ACC) complex. Biotin carboxylase (BC) catalyzes the carboxylation of biotin on its carrier protein (BCCP) and then the CO(2) group is transferred by the transcarboxylase to acetyl-CoA to form malonyl-CoA. The sequence is that of Acetyl-coenzyme A carboxylase carboxyl transferase subunit beta from Methylobacterium sp. (strain 4-46).